A 254-amino-acid polypeptide reads, in one-letter code: 4-hydroxy-tetrahydrodipicolinate reductase (254 aa).

Residue 7–12 participates in NAD(+) binding; the sequence is GASGRI. R35 contributes to the NADP(+) binding site. NAD(+) contacts are provided by residues 91–93 and 115–118; these read GTT and AHNM. H147 acts as the Proton donor/acceptor in catalysis. H148 is a (S)-2,3,4,5-tetrahydrodipicolinate binding site. K151 serves as the catalytic Proton donor. Position 157–158 (157–158) interacts with (S)-2,3,4,5-tetrahydrodipicolinate; the sequence is GT.

Belongs to the DapB family.

It localises to the cytoplasm. It catalyses the reaction (S)-2,3,4,5-tetrahydrodipicolinate + NAD(+) + H2O = (2S,4S)-4-hydroxy-2,3,4,5-tetrahydrodipicolinate + NADH + H(+). The enzyme catalyses (S)-2,3,4,5-tetrahydrodipicolinate + NADP(+) + H2O = (2S,4S)-4-hydroxy-2,3,4,5-tetrahydrodipicolinate + NADPH + H(+). It participates in amino-acid biosynthesis; L-lysine biosynthesis via DAP pathway; (S)-tetrahydrodipicolinate from L-aspartate: step 4/4. Its function is as follows. Catalyzes the conversion of 4-hydroxy-tetrahydrodipicolinate (HTPA) to tetrahydrodipicolinate. The chain is 4-hydroxy-tetrahydrodipicolinate reductase from Helicobacter pylori (strain G27).